The primary structure comprises 201 residues: IDLSRF-like peptide (201 aa).

A signal peptide spans 1–28; sequence MVRRFCNGAVALGIALTACAAFPRAIMA. The propeptide occupies 43 to 201; the sequence is SDACHPYEPF…EKLVKTGFLD (159 aa). Residues 45 to 85 form the LDL-receptor class A domain; the sequence is ACHPYEPFKCPGDGLCISIQYLCDGAPDCQDGYDEDSRLCT. 3 cysteine pairs are disulfide-bonded: Cys46–Cys60, Cys54–Cys73, and Cys67–Cys84.

As to expression, expressed in central brain, antennal and optical lobes, in gnathal, thoracic and abdominal ganglia and in the retrocerebral complex (at protein level).

It localises to the secreted. In Camponotus floridanus (Florida carpenter ant), this protein is IDLSRF-like peptide.